A 363-amino-acid polypeptide reads, in one-letter code: tRNA-specific 2-thiouridylase MnmA (363 aa).

ATP is bound by residues 13-20 and methionine 39; that span reads GLSGGVDS. Positions 99 to 101 are interaction with target base in tRNA; sequence NPD. The active-site Nucleophile is the cysteine 104. Cysteine 104 and cysteine 200 are joined by a disulfide. Glycine 128 provides a ligand contact to ATP. The interaction with tRNA stretch occupies residues 150–152; the sequence is KDQ. Cysteine 200 acts as the Cysteine persulfide intermediate in catalysis. Residues 310–311 form an interaction with tRNA region; sequence RY.

This sequence belongs to the MnmA/TRMU family.

It localises to the cytoplasm. It catalyses the reaction S-sulfanyl-L-cysteinyl-[protein] + uridine(34) in tRNA + AH2 + ATP = 2-thiouridine(34) in tRNA + L-cysteinyl-[protein] + A + AMP + diphosphate + H(+). Catalyzes the 2-thiolation of uridine at the wobble position (U34) of tRNA, leading to the formation of s(2)U34. The protein is tRNA-specific 2-thiouridylase MnmA of Ruthia magnifica subsp. Calyptogena magnifica.